The chain runs to 260 residues: uncharacterized protein (260 aa).

The first 22 residues, 1-22, serve as a signal peptide directing secretion; sequence MGYLKRFALYISILVLIVMVAG. A lipid anchor (N-palmitoyl cysteine) is attached at Cys-23. A lipid anchor (S-diacylglycerol cysteine) is attached at Cys-23.

The protein belongs to the staphylococcal tandem lipoprotein family.

It is found in the cell membrane. This is an uncharacterized protein from Staphylococcus aureus (strain bovine RF122 / ET3-1).